Consider the following 84-residue polypeptide: U4-theraphotoxin-Hhn1b (84 aa).

The first 22 residues, 1–22, serve as a signal peptide directing secretion; it reads MKVTLTAILTCAAVLVLHTTAA. Positions 23–47 are excised as a propeptide; it reads EELEESQLMEVGMPDTELAAVDEER. Disulfide bonds link cysteine 51/cysteine 65, cysteine 55/cysteine 76, and cysteine 70/cysteine 81.

The protein belongs to the neurotoxin 12 (Hwtx-2) family. 02 (Hwtx-2) subfamily. Expressed by the venom gland.

It localises to the secreted. Functionally, postsynaptic neurotoxin. The chain is U4-theraphotoxin-Hhn1b from Cyriopagopus hainanus (Chinese bird spider).